Consider the following 315-residue polypeptide: Ribosomal protein L11 methyltransferase (315 aa).

S-adenosyl-L-methionine is bound by residues T162, G183, D205, and N248.

Belongs to the methyltransferase superfamily. PrmA family.

It localises to the cytoplasm. It carries out the reaction L-lysyl-[protein] + 3 S-adenosyl-L-methionine = N(6),N(6),N(6)-trimethyl-L-lysyl-[protein] + 3 S-adenosyl-L-homocysteine + 3 H(+). Functionally, methylates ribosomal protein L11. This is Ribosomal protein L11 methyltransferase from Enterococcus faecalis (strain ATCC 700802 / V583).